A 298-amino-acid polypeptide reads, in one-letter code: Cyclin-dependent kinase 2 homolog (298 aa).

The region spanning 4–284 (YHKMEKIGEG…AKEALKHDYF (281 aa)) is the Protein kinase domain. ATP-binding positions include 10 to 18 (IGEGTYGVV) and Lys32. At Thr14 the chain carries Phosphothreonine. A Phosphotyrosine modification is found at Tyr15. Asp125 serves as the catalytic Proton acceptor. The residue at position 158 (Thr158) is a Phosphothreonine.

The protein belongs to the protein kinase superfamily. CMGC Ser/Thr protein kinase family. CDC2/CDKX subfamily. In terms of assembly, may form a complex composed of at least the catalytic subunit CRK2 and a cyclin. The cofactor is Mg(2+).

The protein localises to the cytoplasm. The catalysed reaction is L-seryl-[protein] + ATP = O-phospho-L-seryl-[protein] + ADP + H(+). It carries out the reaction L-threonyl-[protein] + ATP = O-phospho-L-threonyl-[protein] + ADP + H(+). The enzyme catalyses [DNA-directed RNA polymerase] + ATP = phospho-[DNA-directed RNA polymerase] + ADP + H(+). With respect to regulation, phosphorylation at Thr-14 or Tyr-15 inactivates the enzyme, while phosphorylation at Thr-158 activates it. Functionally, serine/threonine-protein kinase. Involved in the control of the cell cycle. Required for entry into S-phase and mitosis. Probable component of the kinase complex that phosphorylates the repetitive C-terminus of RNA polymerase II. In Theileria parva (East coast fever infection agent), this protein is Cyclin-dependent kinase 2 homolog.